A 373-amino-acid chain; its full sequence is T-protein (373 aa).

A Chorismate mutase domain is found at 1-90 (MVAELTALRD…ESYSSENDKG (90 aa)). Residues 99–361 (RPVVIVGGGG…DYAQRFQSES (263 aa)) enclose the Prephenate/arogenate dehydrogenase domain.

The protein in the C-terminal section; belongs to the prephenate/arogenate dehydrogenase family.

The protein localises to the cytoplasm. The enzyme catalyses chorismate = prephenate. The catalysed reaction is prephenate + NAD(+) = 3-(4-hydroxyphenyl)pyruvate + CO2 + NADH. Its pathway is amino-acid biosynthesis; L-tyrosine biosynthesis; (4-hydroxyphenyl)pyruvate from prephenate (NAD(+) route): step 1/1. The protein operates within metabolic intermediate biosynthesis; prephenate biosynthesis; prephenate from chorismate: step 1/1. This chain is T-protein (tyrA), found in Escherichia coli (strain K12).